We begin with the raw amino-acid sequence, 997 residues long: Protein translocase subunit SecA (997 aa).

ATP is bound by residues glutamine 102, 120-124, and aspartate 521; that span reads GEGKT. The interval 893–997 is disordered; sequence PADASPNGVV…KYKKCHGAEA (105 aa). A compositionally biased stretch (basic and acidic residues) spans 938–953; it reads AIEREFEKKKQQELSH. Zn(2+) is bound by residues cysteine 981, cysteine 983, cysteine 992, and histidine 993. Residues 987-997 show a composition bias toward basic residues; that stretch reads KKYKKCHGAEA.

Belongs to the SecA family. Monomer and homodimer. Part of the essential Sec protein translocation apparatus which comprises SecA, SecYEG and auxiliary proteins SecDF. Other proteins may also be involved. The cofactor is Zn(2+).

It is found in the cell inner membrane. The protein resides in the cytoplasm. It catalyses the reaction ATP + H2O + cellular proteinSide 1 = ADP + phosphate + cellular proteinSide 2.. Part of the Sec protein translocase complex. Interacts with the SecYEG preprotein conducting channel. Has a central role in coupling the hydrolysis of ATP to the transfer of proteins into and across the cell membrane, serving as an ATP-driven molecular motor driving the stepwise translocation of polypeptide chains across the membrane. This is Protein translocase subunit SecA from Acidobacterium capsulatum (strain ATCC 51196 / DSM 11244 / BCRC 80197 / JCM 7670 / NBRC 15755 / NCIMB 13165 / 161).